A 323-amino-acid polypeptide reads, in one-letter code: Elongation factor P--(R)-beta-lysine ligase (323 aa).

Position 76–78 (76–78) interacts with substrate; sequence SPE. ATP contacts are provided by residues 100–102 and N109; that span reads RNE. A substrate-binding site is contributed by Y118. Residue 242-243 coordinates ATP; it reads EL. Position 249 (E249) interacts with substrate. G298 is an ATP binding site.

This sequence belongs to the class-II aminoacyl-tRNA synthetase family. EpmA subfamily. As to quaternary structure, homodimer.

The enzyme catalyses D-beta-lysine + L-lysyl-[protein] + ATP = N(6)-((3R)-3,6-diaminohexanoyl)-L-lysyl-[protein] + AMP + diphosphate + H(+). In terms of biological role, with EpmB is involved in the beta-lysylation step of the post-translational modification of translation elongation factor P (EF-P). Catalyzes the ATP-dependent activation of (R)-beta-lysine produced by EpmB, forming a lysyl-adenylate, from which the beta-lysyl moiety is then transferred to the epsilon-amino group of a conserved specific lysine residue in EF-P. This chain is Elongation factor P--(R)-beta-lysine ligase, found in Haemophilus influenzae (strain ATCC 51907 / DSM 11121 / KW20 / Rd).